Consider the following 134-residue polypeptide: Profilin-3 (134 aa).

Residues cysteine 13 and cysteine 118 are joined by a disulfide bond. Residues 84–100 carry the Involved in PIP2 interaction motif; it reads AVIRGKKGSGGITIKKT. Position 114 is a phosphothreonine (threonine 114).

This sequence belongs to the profilin family. Occurs in many kinds of cells as a complex with monomeric actin in a 1:1 ratio. Phosphorylated by MAP kinases.

The protein resides in the cytoplasm. The protein localises to the cytoskeleton. Binds to actin and affects the structure of the cytoskeleton. At high concentrations, profilin prevents the polymerization of actin, whereas it enhances it at low concentrations. This chain is Profilin-3, found in Olea europaea (Common olive).